Consider the following 215-residue polypeptide: Adenylate kinase (215 aa).

Glycine 10–threonine 15 contributes to the ATP binding site. The NMP stretch occupies residues serine 30 to valine 59. Residues threonine 31, arginine 36, asparagine 57–valine 59, glycine 85–arginine 88, and glutamine 92 contribute to the AMP site. The interval glycine 122 to aspartate 159 is LID. Residues arginine 123 and isoleucine 132 to tyrosine 133 contribute to the ATP site. AMP contacts are provided by arginine 156 and arginine 167. ATP is bound at residue glycine 201.

It belongs to the adenylate kinase family. In terms of assembly, monomer.

It is found in the cytoplasm. It carries out the reaction AMP + ATP = 2 ADP. It participates in purine metabolism; AMP biosynthesis via salvage pathway; AMP from ADP: step 1/1. Functionally, catalyzes the reversible transfer of the terminal phosphate group between ATP and AMP. Plays an important role in cellular energy homeostasis and in adenine nucleotide metabolism. The chain is Adenylate kinase from Pseudomonas syringae pv. tomato (strain ATCC BAA-871 / DC3000).